The chain runs to 123 residues: Ribonuclease P protein component (123 aa).

Belongs to the RnpA family. As to quaternary structure, consists of a catalytic RNA component (M1 or rnpB) and a protein subunit.

The enzyme catalyses Endonucleolytic cleavage of RNA, removing 5'-extranucleotides from tRNA precursor.. Its function is as follows. RNaseP catalyzes the removal of the 5'-leader sequence from pre-tRNA to produce the mature 5'-terminus. It can also cleave other RNA substrates such as 4.5S RNA. The protein component plays an auxiliary but essential role in vivo by binding to the 5'-leader sequence and broadening the substrate specificity of the ribozyme. The polypeptide is Ribonuclease P protein component (Streptococcus pneumoniae (strain JJA)).